Here is a 105-residue protein sequence, read N- to C-terminus: Zinc metalloproteinase/disintegrin (105 aa).

In terms of domain architecture, Peptidase M12B spans 1–3 (DEP). The 86-residue stretch at 11–96 (PPVCGNYFVE…AECTDRFQRN (86 aa)) folds into the Disintegrin domain. Disulfide bonds link cysteine 25/cysteine 43, cysteine 27/cysteine 38, cysteine 37/cysteine 60, cysteine 51/cysteine 57, cysteine 56/cysteine 82, and cysteine 69/cysteine 89. Positions 75 to 77 (ECD) match the D/ECD-tripeptide motif. Positions 99–105 (PCQNNNG) are excised as a propeptide.

Belongs to the venom metalloproteinase (M12B) family. P-III subfamily. As to quaternary structure, monomer. It depends on Zn(2+) as a cofactor. As to expression, expressed by the venom gland.

It localises to the secreted. Functionally, impairs hemostasis in the envenomed animal. Its function is as follows. Inhibits platelet aggregation induced by ADP, thrombin, platelet-activating factor and collagen. Acts by inhibiting fibrinogen interaction with platelet receptors GPIIb/GPIIIa (ITGA2B/ITGB3). In Gloydius brevicauda (Korean slamosa snake), this protein is Zinc metalloproteinase/disintegrin.